The chain runs to 364 residues: Chorismate synthase (364 aa).

Positions 47 and 53 each coordinate NADP(+). Residues 124–126 (RSS), Gly286, 301–305 (KPTAT), and Arg327 contribute to the FMN site.

The protein belongs to the chorismate synthase family. As to quaternary structure, homotetramer. FMNH2 serves as cofactor.

It carries out the reaction 5-O-(1-carboxyvinyl)-3-phosphoshikimate = chorismate + phosphate. Its pathway is metabolic intermediate biosynthesis; chorismate biosynthesis; chorismate from D-erythrose 4-phosphate and phosphoenolpyruvate: step 7/7. In terms of biological role, catalyzes the anti-1,4-elimination of the C-3 phosphate and the C-6 proR hydrogen from 5-enolpyruvylshikimate-3-phosphate (EPSP) to yield chorismate, which is the branch point compound that serves as the starting substrate for the three terminal pathways of aromatic amino acid biosynthesis. This reaction introduces a second double bond into the aromatic ring system. The protein is Chorismate synthase of Acaryochloris marina (strain MBIC 11017).